The sequence spans 720 residues: Mitogen-activated protein kinase 6 (720 aa).

Residue Met-1 forms a Peptide (Met-Gly) (interchain with G-Cter in ubiquitin) linkage. The Protein kinase domain maps to 20-316 (YMDLKPLGCG…AEEALSHPYM (297 aa)). ATP is bound by residues 26–34 (LGCGGNGLV) and Lys-49. Asp-152 functions as the Proton acceptor in the catalytic mechanism. Ser-189 carries the post-translational modification Phosphoserine; by PAK1, PAK2 and PAK3. Residues 189–191 (SEG) carry the SEG motif motif. An FRIEDE motif motif is present at residues 332–337 (FHIEDE). Ser-386, Ser-452, Ser-554, and Ser-556 each carry phosphoserine. The disordered stretch occupies residues 638-657 (SEMLETEPVEEGKRGERGRE). The span at 647–657 (EEGKRGERGRE) shows a compositional bias: basic and acidic residues. A Phosphoserine modification is found at Ser-683. A compositionally biased stretch (polar residues) spans 698–714 (PSAMKSSPQIPHKTYSN). The interval 698–720 (PSAMKSSPQIPHKTYSNILKHLN) is disordered.

The protein belongs to the protein kinase superfamily. CMGC Ser/Thr protein kinase family. MAP kinase subfamily. As to quaternary structure, heterodimer with ERK4/MAPK4. Interacts with (via FRIEDE motif) MAPKAPK5. Interacts with UBE3A; this interaction may be indirect and mediated by HERC2, possibly via HERC2 interaction with NEURL4. It depends on Mg(2+) as a cofactor. Phosphorylated at Ser-189 by PAK1, PAK2 and PAK3 resulting in catalytic activation. Phosphorylated by MAPKAPK5 at other sites. Post-translationally, ubiquitination at Met-1 leads to degradation by the proteasome pathway. In terms of tissue distribution, highest levels within the nervous system, expressed in different tissues, mostly in skeletal muscle.

The protein localises to the cytoplasm. Its subcellular location is the nucleus. The catalysed reaction is L-seryl-[protein] + ATP = O-phospho-L-seryl-[protein] + ADP + H(+). It catalyses the reaction L-threonyl-[protein] + ATP = O-phospho-L-threonyl-[protein] + ADP + H(+). Its activity is regulated as follows. Activated by phosphorylation at Ser-189. Its function is as follows. Atypical MAPK protein. Phosphorylates microtubule-associated protein 2 (MAP2) and MAPKAPK5. The precise role of the complex formed with MAPKAPK5 is still unclear, but the complex follows a complex set of phosphorylation events: upon interaction with atypical MAPKAPK5, ERK3/MAPK6 is phosphorylated at Ser-189 and then mediates phosphorylation and activation of MAPKAPK5, which in turn phosphorylates ERK3/MAPK6. May promote entry in the cell cycle. This is Mitogen-activated protein kinase 6 (Mapk6) from Rattus norvegicus (Rat).